The chain runs to 313 residues: Porphobilinogen deaminase (313 aa).

At C241 the chain carries S-(dipyrrolylmethanemethyl)cysteine.

Belongs to the HMBS family. Monomer. Requires dipyrromethane as cofactor.

It catalyses the reaction 4 porphobilinogen + H2O = hydroxymethylbilane + 4 NH4(+). It functions in the pathway porphyrin-containing compound metabolism; protoporphyrin-IX biosynthesis; coproporphyrinogen-III from 5-aminolevulinate: step 2/4. Its pathway is porphyrin-containing compound metabolism; chlorophyll biosynthesis. Its function is as follows. Tetrapolymerization of the monopyrrole PBG into the hydroxymethylbilane pre-uroporphyrinogen in several discrete steps. This is Porphobilinogen deaminase from Chlorobium phaeovibrioides (strain DSM 265 / 1930) (Prosthecochloris vibrioformis (strain DSM 265)).